Reading from the N-terminus, the 175-residue chain is NAD(P)H-quinone oxidoreductase subunit I, chloroplastic (175 aa).

4Fe-4S ferredoxin-type domains lie at 55-84 (GRIHFEFDKCIACEVCVRVCPINLPVVNWE) and 95-124 (QTYSIDFGVCIFCGNCVEYCPTNCLSMTEE). [4Fe-4S] cluster is bound by residues cysteine 64, cysteine 67, cysteine 70, cysteine 74, cysteine 104, cysteine 107, cysteine 110, and cysteine 114.

The protein belongs to the complex I 23 kDa subunit family. In terms of assembly, NDH is composed of at least 16 different subunits, 5 of which are encoded in the nucleus. [4Fe-4S] cluster is required as a cofactor.

It localises to the plastid. It is found in the chloroplast thylakoid membrane. It carries out the reaction a plastoquinone + NADH + (n+1) H(+)(in) = a plastoquinol + NAD(+) + n H(+)(out). The enzyme catalyses a plastoquinone + NADPH + (n+1) H(+)(in) = a plastoquinol + NADP(+) + n H(+)(out). Functionally, NDH shuttles electrons from NAD(P)H:plastoquinone, via FMN and iron-sulfur (Fe-S) centers, to quinones in the photosynthetic chain and possibly in a chloroplast respiratory chain. The immediate electron acceptor for the enzyme in this species is believed to be plastoquinone. Couples the redox reaction to proton translocation, and thus conserves the redox energy in a proton gradient. In Chlorokybus atmophyticus (Soil alga), this protein is NAD(P)H-quinone oxidoreductase subunit I, chloroplastic.